We begin with the raw amino-acid sequence, 833 residues long: Leucine--tRNA ligase (833 aa).

Residues 41-52 carry the 'HIGH' region motif; it reads PYPSGAGLHVGH. The 'KMSKS' region signature appears at 610–614; the sequence is KMSKS. An ATP-binding site is contributed by Lys-613.

It belongs to the class-I aminoacyl-tRNA synthetase family.

The protein localises to the cytoplasm. The catalysed reaction is tRNA(Leu) + L-leucine + ATP = L-leucyl-tRNA(Leu) + AMP + diphosphate. The protein is Leucine--tRNA ligase of Streptococcus mutans serotype c (strain ATCC 700610 / UA159).